Here is an 833-residue protein sequence, read N- to C-terminus: Leucine--tRNA ligase (833 aa).

A 'HIGH' region motif is present at residues 41 to 52 (PYPSGAGLHVGH). The 'KMSKS' region motif lies at 610-614 (KMSKS). An ATP-binding site is contributed by Lys-613.

Belongs to the class-I aminoacyl-tRNA synthetase family.

The protein localises to the cytoplasm. It catalyses the reaction tRNA(Leu) + L-leucine + ATP = L-leucyl-tRNA(Leu) + AMP + diphosphate. This chain is Leucine--tRNA ligase, found in Streptococcus pneumoniae (strain CGSP14).